We begin with the raw amino-acid sequence, 242 residues long: Zinc-finger homeodomain protein 11 (242 aa).

The ZF-HD dimerization-type; degenerate zinc-finger motif lies at 31 to 82; the sequence is YKECLKNHAANLGGHALDGCGEFMPSPTATSTDPSSLRCAACGCHRNFHRRD. Disordered stretches follow at residues 83–109 and 135–161; these read PSENLNFLTAPPISSPSGTESPPSRHV and PGPSDQDPTVVRSENSSRGAMRKRTRT. A DNA-binding region (homeobox; atypical) is located at residues 156–213; that stretch reads RKRTRTKFTPEQKIKMRAFAEKAGWKINGCDEKSVREFCNEVGIERGVLKVWMHNNKY.

As to quaternary structure, homo- and heterodimer with other ZFHD proteins. Interacts with HIPP20, HIPP21, HIPP22, HIPP23, HIPP24, HIPP26, HIPP27, HIPP30 and MED25 (via ACID domain). Interacts with NAC019, NAC055 and NAC072 (via NAC binding domain). Binds to ZHD1, ZHD2, ZHD3, ZHD4, ZHD5, ZHD6, ZHD7, ZHD8, ZHD9, ZHD12, ZHD13 and ZHD14. In terms of tissue distribution, expressed in roots, inflorescences, open flowers and seeds. Detected in stems and seedlings.

Its subcellular location is the nucleus. Functionally, transcription factor involved in the up-regulation of several stress-inducible genes. Acts as a transcriptional activator by interacting with MED25 and NAC proteins. Involved in increased drought tolerance. This chain is Zinc-finger homeodomain protein 11 (ZHD11), found in Arabidopsis thaliana (Mouse-ear cress).